Here is a 252-residue protein sequence, read N- to C-terminus: Adenosine 5'-phosphosulfate reductase (252 aa).

The [4Fe-4S] cluster site is built by C125, C126, C208, and C211. Residues 219–252 (DGYSREGRWSDRDKTECGLHTSPEDEDGAHAAES) are disordered. Basic and acidic residues predominate over residues 221–235 (YSREGRWSDRDKTEC). The active-site Nucleophile; cysteine thiosulfonate intermediate is the C235.

Belongs to the PAPS reductase family. CysH subfamily. [4Fe-4S] cluster is required as a cofactor.

It is found in the cytoplasm. It carries out the reaction [thioredoxin]-disulfide + sulfite + AMP + 2 H(+) = adenosine 5'-phosphosulfate + [thioredoxin]-dithiol. The protein operates within sulfur metabolism; hydrogen sulfide biosynthesis; sulfite from sulfate. Functionally, catalyzes the formation of sulfite from adenosine 5'-phosphosulfate (APS) using thioredoxin as an electron donor. The sequence is that of Adenosine 5'-phosphosulfate reductase from Salinibacter ruber (strain DSM 13855 / M31).